Consider the following 935-residue polypeptide: 2-oxoglutarate dehydrogenase E1 component (935 aa).

It belongs to the alpha-ketoglutarate dehydrogenase family. As to quaternary structure, homodimer. Part of the 2-oxoglutarate dehydrogenase (OGDH) complex composed of E1 (2-oxoglutarate dehydrogenase), E2 (dihydrolipoamide succinyltransferase) and E3 (dihydrolipoamide dehydrogenase); the complex contains multiple copies of the three enzymatic components (E1, E2 and E3). Thiamine diphosphate serves as cofactor.

The enzyme catalyses N(6)-[(R)-lipoyl]-L-lysyl-[protein] + 2-oxoglutarate + H(+) = N(6)-[(R)-S(8)-succinyldihydrolipoyl]-L-lysyl-[protein] + CO2. Its function is as follows. E1 component of the 2-oxoglutarate dehydrogenase (OGDH) complex which catalyzes the decarboxylation of 2-oxoglutarate, the first step in the conversion of 2-oxoglutarate to succinyl-CoA and CO(2). This is 2-oxoglutarate dehydrogenase E1 component (sucA) from Haemophilus influenzae (strain ATCC 51907 / DSM 11121 / KW20 / Rd).